We begin with the raw amino-acid sequence, 260 residues long: Glucosamine-6-phosphate deaminase (260 aa).

Aspartate 67 serves as the catalytic Proton acceptor; for enolization step. The active-site For ring-opening step is aspartate 136. Histidine 138 functions as the Proton acceptor; for ring-opening step in the catalytic mechanism. Residue glutamate 143 is the For ring-opening step of the active site.

It belongs to the glucosamine/galactosamine-6-phosphate isomerase family. NagB subfamily.

It carries out the reaction alpha-D-glucosamine 6-phosphate + H2O = beta-D-fructose 6-phosphate + NH4(+). It participates in amino-sugar metabolism; N-acetylneuraminate degradation; D-fructose 6-phosphate from N-acetylneuraminate: step 5/5. In terms of biological role, catalyzes the reversible isomerization-deamination of glucosamine 6-phosphate (GlcN6P) to form fructose 6-phosphate (Fru6P) and ammonium ion. The sequence is that of Glucosamine-6-phosphate deaminase from Arthrobacter sp. (strain FB24).